The chain runs to 199 residues: MNPSGLESLIEALRCLPGIGPKSAQRMAYHLLQRDRPGAQRLGDAVLHALQAIRHCQRCNTFTEGDICERCASPRRDPELLCVVETPVDMNMMEQTLTYRGMYYVLMGKISPLDGVGPKELGLDRLMTRALDGVVKEVILATNYTNEGEATAHYITAMLKPKGVGVTRIARGVPVGGELEYVDSGTLAQALRERKICGD.

The C4-type zinc finger occupies C56 to C71. One can recognise a Toprim domain in the interval E79–P174.

Belongs to the RecR family.

May play a role in DNA repair. It seems to be involved in an RecBC-independent recombinational process of DNA repair. It may act with RecF and RecO. The polypeptide is Recombination protein RecR (Dechloromonas aromatica (strain RCB)).